A 252-amino-acid polypeptide reads, in one-letter code: Protein IL-40 (252 aa).

A signal peptide spans 1-18; it reads MALLQLLLFAMLAACGFS. 2 N-linked (GlcNAc...) asparagine glycosylation sites follow: Asn82 and Asn177.

As to expression, expressed in bone marrow, spleen and lymph node.

The protein resides in the secreted. In terms of biological role, probable B cell-associated cytokine that plays a role in the regulation of humoral immune responses. Involved in lymphocyte B cell development and immunoglobulin/IgA production. The polypeptide is Protein IL-40 (Mus musculus (Mouse)).